Reading from the N-terminus, the 466-residue chain is Delta-1 crystallin (466 aa).

This sequence belongs to the lyase 1 family. Argininosuccinate lyase subfamily. In terms of assembly, homotetramer. As to expression, eye lens.

Delta crystallin, the principal crystallin in embryonic lens, is found only in birds and reptiles. This chain is Delta-1 crystallin (ASL1), found in Meleagris gallopavo (Wild turkey).